Here is a 213-residue protein sequence, read N- to C-terminus: Probable nicotinate-nucleotide adenylyltransferase (213 aa).

The protein belongs to the NadD family.

It carries out the reaction nicotinate beta-D-ribonucleotide + ATP + H(+) = deamido-NAD(+) + diphosphate. It participates in cofactor biosynthesis; NAD(+) biosynthesis; deamido-NAD(+) from nicotinate D-ribonucleotide: step 1/1. In terms of biological role, catalyzes the reversible adenylation of nicotinate mononucleotide (NaMN) to nicotinic acid adenine dinucleotide (NaAD). The polypeptide is Probable nicotinate-nucleotide adenylyltransferase (Shigella boydii serotype 4 (strain Sb227)).